Reading from the N-terminus, the 462-residue chain is Nuclear distribution protein PAC1 (462 aa).

In terms of domain architecture, LisH spans Q9 to A41. A coiled-coil region spans residues T60 to T87. The segment covering S78–S99 has biased composition (polar residues). Residues S78–P103 form a disordered region. WD repeat units follow at residues S113–K154, H156–R196, G200–T247, G250–T289, G292–L352, G354–K393, A398–R445, and V447–S462. The tract at residues K414–K434 is disordered.

Belongs to the WD repeat LIS1/nudF family. As to quaternary structure, self-associates. Interacts with NDL1 and dynein.

It is found in the cytoplasm. It localises to the cytoskeleton. The protein resides in the spindle pole. Functionally, positively regulates the activity of the minus-end directed microtubule motor protein dynein. May enhance dynein-mediated microtubule sliding by targeting dynein to the microtubule plus end. Required for nuclear migration during vegetative growth as well as development. Required for retrograde early endosome (EE) transport from the hyphal tip. Required for localization of dynein to the mitotic spindle poles. Recruits additional proteins to the dynein complex at SPBs. The polypeptide is Nuclear distribution protein PAC1 (Phaeosphaeria nodorum (strain SN15 / ATCC MYA-4574 / FGSC 10173) (Glume blotch fungus)).